The sequence spans 160 residues: Crossover junction endodeoxyribonuclease RuvC (160 aa).

Catalysis depends on residues D7, E73, and D145. Mg(2+) contacts are provided by D7, E73, and D145.

Belongs to the RuvC family. In terms of assembly, homodimer which binds Holliday junction (HJ) DNA. The HJ becomes 2-fold symmetrical on binding to RuvC with unstacked arms; it has a different conformation from HJ DNA in complex with RuvA. In the full resolvosome a probable DNA-RuvA(4)-RuvB(12)-RuvC(2) complex forms which resolves the HJ. Mg(2+) serves as cofactor.

It is found in the cytoplasm. It carries out the reaction Endonucleolytic cleavage at a junction such as a reciprocal single-stranded crossover between two homologous DNA duplexes (Holliday junction).. Functionally, the RuvA-RuvB-RuvC complex processes Holliday junction (HJ) DNA during genetic recombination and DNA repair. Endonuclease that resolves HJ intermediates. Cleaves cruciform DNA by making single-stranded nicks across the HJ at symmetrical positions within the homologous arms, yielding a 5'-phosphate and a 3'-hydroxyl group; requires a central core of homology in the junction. The consensus cleavage sequence is 5'-(A/T)TT(C/G)-3'. Cleavage occurs on the 3'-side of the TT dinucleotide at the point of strand exchange. HJ branch migration catalyzed by RuvA-RuvB allows RuvC to scan DNA until it finds its consensus sequence, where it cleaves and resolves the cruciform DNA. This Synechococcus sp. (strain CC9311) protein is Crossover junction endodeoxyribonuclease RuvC.